The chain runs to 238 residues: Protein LicA homolog (238 aa).

The protein belongs to the peptidase S49 family.

The sequence is that of Protein LicA homolog (licA) from Mycoplasma capricolum subsp. capricolum (strain California kid / ATCC 27343 / NCTC 10154).